The sequence spans 396 residues: Mitogen-activated protein kinase mpkC (396 aa).

The region spanning 20–299 (YSDLQPVGLG…AAKALEHPYL (280 aa)) is the Protein kinase domain. ATP contacts are provided by residues 26–34 (VGLGAFGLV) and K49. D141 acts as the Proton acceptor in catalysis. T171 is subject to Phosphothreonine. The short motif at 171–173 (TGY) is the TXY element. The residue at position 173 (Y173) is a Phosphotyrosine.

Belongs to the protein kinase superfamily. Ser/Thr protein kinase family. MAP kinase subfamily. HOG1 sub-subfamily. Mg(2+) serves as cofactor. Post-translationally, dually phosphorylated on Thr-171 and Tyr-173, which activates the enzyme.

The catalysed reaction is L-seryl-[protein] + ATP = O-phospho-L-seryl-[protein] + ADP + H(+). It carries out the reaction L-threonyl-[protein] + ATP = O-phospho-L-threonyl-[protein] + ADP + H(+). With respect to regulation, activated by tyrosine and threonine phosphorylation. Mitogen-activated protein kinase required for growth on media where sorbitol or mannitol is the sole carbon source. The sequence is that of Mitogen-activated protein kinase mpkC (mpkC) from Aspergillus niger (strain ATCC MYA-4892 / CBS 513.88 / FGSC A1513).